Here is a 166-residue protein sequence, read N- to C-terminus: MNIRQQITQFLSLAYVFSSAFMLWKTLSVIANSHSPIVVVLSGSMEPAFQRGDILFLWNRDQQQKVGDIVVYEIDGKTIPIVHRVLREHHNQQKQLLLTKGDNNAVDDLSLYAKKQQYLNQKADLVGTVKGYLPFIGYVTILISENVYFKYGMLGLLGLSSLFSNE.

The Cytoplasmic portion of the chain corresponds to 1–9 (MNIRQQITQ). Residues 10 to 30 (FLSLAYVFSSAFMLWKTLSVI) traverse the membrane as a helical; Signal-anchor for type II membrane protein segment. The Lumenal segment spans residues 31-166 (ANSHSPIVVV…LGLSSLFSNE (136 aa)). Catalysis depends on charge relay system residues Ser44, His83, and Asp108. Positions 152–163 (GMLGLLGLSSLF) are C-terminal short (CTS) helix.

This sequence belongs to the peptidase S26B family. As to quaternary structure, component of the signal peptidase complex (SPC) composed of a catalytic subunit SEC11 and three accessory subunits SPC1, SPC2 and SPC3. The complex induces a local thinning of the ER membrane which is used to measure the length of the signal peptide (SP) h-region of protein substrates. This ensures the selectivity of the complex towards h-regions shorter than 18-20 amino acids. SPC associates with the translocon complex.

The protein localises to the endoplasmic reticulum membrane. It catalyses the reaction Cleavage of hydrophobic, N-terminal signal or leader sequences from secreted and periplasmic proteins.. In terms of biological role, catalytic component of the signal peptidase complex (SPC) which catalyzes the cleavage of N-terminal signal sequences from nascent proteins as they are translocated into the lumen of the endoplasmic reticulum. Specifically cleaves N-terminal signal peptides that contain a hydrophobic alpha-helix (h-region) shorter than 18-20 amino acids. In Candida dubliniensis (strain CD36 / ATCC MYA-646 / CBS 7987 / NCPF 3949 / NRRL Y-17841) (Yeast), this protein is Signal peptidase complex catalytic subunit SEC11 (SEC11).